Here is a 160-residue protein sequence, read N- to C-terminus: Glucagon-1 (160 aa).

A signal peptide spans 1–22 (MSDPGFLAAPVLLLLLVSLASA). Propeptides lie at residues 23-40 (SLEQAASRDDDSAERPLS), 74-79 (GGSELQ), and 116-127 (DGGDHLAENSED). The tract at residues 112–132 (KSRRDGGDHLAENSEDKRHAE) is disordered.

The protein belongs to the glucagon family.

It is found in the secreted. Functionally, promotes hydrolysis of glycogen and lipids, and raises the blood sugar level. This Petromyzon marinus (Sea lamprey) protein is Glucagon-1 (gcg1).